Reading from the N-terminus, the 261-residue chain is MLLEKSKIEIIEQFIHILEILEMYAKEGSDEKAIIRLMLDYLEKGYVLDDDILPIASKISEIAKKVGSFDMKREISLLLFGERKRLTKSQKNKIKKIIEILEYLKSYIEKKPYKSYEDKLILNLIGLKILRLDNGIVLDYNSEVRSLTNMALRVGSYELKNEIELLLTGRRRRKLTEEFIQKRLSIIKILEMVKDFIDKKEFKSSFDYEALFLINLKIYRIEEGILKNFDEEIESILNIARKVGNHKLREQIVLLKESIKN.

This is an uncharacterized protein from Methanocaldococcus jannaschii (strain ATCC 43067 / DSM 2661 / JAL-1 / JCM 10045 / NBRC 100440) (Methanococcus jannaschii).